A 465-amino-acid polypeptide reads, in one-letter code: ATP synthase subunit beta (465 aa).

Residue 151-158 (GGAGVGKT) participates in ATP binding.

The protein belongs to the ATPase alpha/beta chains family. As to quaternary structure, F-type ATPases have 2 components, CF(1) - the catalytic core - and CF(0) - the membrane proton channel. CF(1) has five subunits: alpha(3), beta(3), gamma(1), delta(1), epsilon(1). CF(0) has four main subunits: a(1), b(1), b'(1) and c(9-12).

The protein localises to the cell inner membrane. The catalysed reaction is ATP + H2O + 4 H(+)(in) = ADP + phosphate + 5 H(+)(out). Produces ATP from ADP in the presence of a proton gradient across the membrane. The catalytic sites are hosted primarily by the beta subunits. The polypeptide is ATP synthase subunit beta (Chloroherpeton thalassium (strain ATCC 35110 / GB-78)).